A 562-amino-acid chain; its full sequence is Dihydroxy-acid dehydratase (562 aa).

Asp80 is a Mg(2+) binding site. A [2Fe-2S] cluster-binding site is contributed by Cys121. Mg(2+) is bound by residues Asp122 and Lys123. An N6-carboxylysine modification is found at Lys123. Cys194 is a binding site for [2Fe-2S] cluster. Position 446 (Glu446) interacts with Mg(2+). Ser472 (proton acceptor) is an active-site residue.

This sequence belongs to the IlvD/Edd family. As to quaternary structure, homodimer. Requires [2Fe-2S] cluster as cofactor. Mg(2+) is required as a cofactor.

It carries out the reaction (2R)-2,3-dihydroxy-3-methylbutanoate = 3-methyl-2-oxobutanoate + H2O. It catalyses the reaction (2R,3R)-2,3-dihydroxy-3-methylpentanoate = (S)-3-methyl-2-oxopentanoate + H2O. Its pathway is amino-acid biosynthesis; L-isoleucine biosynthesis; L-isoleucine from 2-oxobutanoate: step 3/4. It functions in the pathway amino-acid biosynthesis; L-valine biosynthesis; L-valine from pyruvate: step 3/4. Functions in the biosynthesis of branched-chain amino acids. Catalyzes the dehydration of (2R,3R)-2,3-dihydroxy-3-methylpentanoate (2,3-dihydroxy-3-methylvalerate) into 2-oxo-3-methylpentanoate (2-oxo-3-methylvalerate) and of (2R)-2,3-dihydroxy-3-methylbutanoate (2,3-dihydroxyisovalerate) into 2-oxo-3-methylbutanoate (2-oxoisovalerate), the penultimate precursor to L-isoleucine and L-valine, respectively. The polypeptide is Dihydroxy-acid dehydratase (Staphylococcus aureus (strain COL)).